We begin with the raw amino-acid sequence, 391 residues long: Chorismate synthase (391 aa).

R48 contacts NADP(+). FMN is bound by residues 126-128, G287, 302-306, and R329; these read RSS and KPTSS.

This sequence belongs to the chorismate synthase family. It depends on FMNH2 as a cofactor.

The catalysed reaction is 5-O-(1-carboxyvinyl)-3-phosphoshikimate = chorismate + phosphate. The protein operates within metabolic intermediate biosynthesis; chorismate biosynthesis; chorismate from D-erythrose 4-phosphate and phosphoenolpyruvate: step 7/7. Catalyzes the anti-1,4-elimination of the C-3 phosphate and the C-6 proR hydrogen from 5-enolpyruvylshikimate-3-phosphate (EPSP) to yield chorismate, which is the branch point compound that serves as the starting substrate for the three terminal pathways of aromatic amino acid biosynthesis. This reaction introduces a second double bond into the aromatic ring system. This is Chorismate synthase from Sulfolobus acidocaldarius (strain ATCC 33909 / DSM 639 / JCM 8929 / NBRC 15157 / NCIMB 11770).